Consider the following 563-residue polypeptide: MLEEAGEVLENVLKASCLPLGFIVFLPAVLLLVAPPLPAADAAHEFTVYRMQQYDLQGQPYGTRNAVLNTEARTVDADVLSRRCVLMRLLDFSYEHYQKALRQSAGAVVIILPRAMAAVPQDVVRQFMEIEPEMLAMETVVPVYFAVEDEALLSIYEQTQAASASQGSASAAEVLLHTATANGFQMVTSGAQSQAVSDWLITSVEGRLTGLGGEDLPTIVIVAHYDAFGVAPWLSLGADSNGSGISVLLELARLFSRLYTYKRTHAAYNLLFFASGGGKFNYQGTKRWLEDSLDHTDSSLLQDNVAFVLCLDTVGRGSHLRLHVSKPPREGTLQHAFLRELETVAAHQFPDVSFSMVHKKINLADDVLAWEHERFAIRRLPAFTLSHLESHRAGPRSSIMDVRSRVDSKTLTRNTRIIAEALTRVIYNLTEKGTPPDMPVFTEQMQVQEEQIDSVMDWLTNQPRAAQLLDKDGTFLSTLEHFLSRYLKDVRQHHVKADKRDPEFVFYDQLKQVMNAYRVKPAIFDLLLALCIGAYLGMAYTAVQHFHVLYKTVQRLLLKAKAQ.

The N-terminal stretch at 1–42 (MLEEAGEVLENVLKASCLPLGFIVFLPAVLLLVAPPLPAADA) is a signal peptide. Over 43–522 (AHEFTVYRMQ…VMNAYRVKPA (480 aa)) the chain is Lumenal. 2 N-linked (GlcNAc...) asparagine glycosylation sites follow: Asn-241 and Asn-428. Residues 523-543 (IFDLLLALCIGAYLGMAYTAV) traverse the membrane as a helical segment. At 544–563 (QHFHVLYKTVQRLLLKAKAQ) the chain is on the cytoplasmic side.

This sequence belongs to the nicastrin family. Component of the back of Sec61 (BOS) complex, composed of NCLN/Nicalin, NOMO1 and TMEM147. The BOS complex is part of the multi-pass translocon (MPT) complex, composed of three subcomplexes, the GEL complex (composed of RAB5IF/OPTI and TMCO1), the BOS complex (composed of NCLN/Nicalin, NOMO1 and TMEM147) and the PAT complex (composed of WDR83OS/Asterix and CCDC47). The MPT complex associates with the SEC61 complex.

The protein localises to the endoplasmic reticulum membrane. Its function is as follows. Component of the multi-pass translocon (MPT) complex that mediates insertion of multi-pass membrane proteins into the lipid bilayer of membranes. The MPT complex takes over after the SEC61 complex: following membrane insertion of the first few transmembrane segments of proteins by the SEC61 complex, the MPT complex occludes the lateral gate of the SEC61 complex to promote insertion of subsequent transmembrane regions. May antagonize Nodal signaling and subsequent organization of axial structures during mesodermal patterning, via its interaction with NOMO. The sequence is that of BOS complex subunit NCLN (Ncln) from Mus musculus (Mouse).